A 338-amino-acid chain; its full sequence is Thiosulfate-binding protein (338 aa).

Positions 1 to 25 (MAVNLLKKNSLALVASLLLAGHVQA) are cleaved as a signal peptide.

Belongs to the prokaryotic sulfate-binding protein family. As to quaternary structure, the complex is composed of two ATP-binding proteins (CysA), two transmembrane proteins (CysT and CysW) and a solute-binding protein (CysP).

The protein resides in the periplasm. Its function is as follows. Part of the ABC transporter complex CysAWTP (TC 3.A.1.6.1) involved in sulfate/thiosulfate import. This protein specifically binds thiosulfate and is involved in its transmembrane transport. The protein is Thiosulfate-binding protein (cysP) of Escherichia coli (strain K12).